Reading from the N-terminus, the 229-residue chain is Cytochrome c oxidase subunit 2 (229 aa).

Residues 1 to 26 (MATWAQFGLQDASSPLMEELTYFHDY) lie on the Mitochondrial intermembrane side of the membrane. Residues 27–48 (ALIVLTLITILVFYGLVSLLLS) form a helical membrane-spanning segment. Over 49-62 (SSTNRFFLEGQELE) the chain is Mitochondrial matrix. The chain crosses the membrane as a helical span at residues 63–82 (TIWTVVPAFILIFIALPSLQ). Residues 83-229 (LLYLMDEVNN…ENWVAQYIEE (147 aa)) lie on the Mitochondrial intermembrane side of the membrane. Residues His-161, Cys-196, Glu-198, Cys-200, His-204, and Met-207 each coordinate Cu cation. Glu-198 contacts Mg(2+).

It belongs to the cytochrome c oxidase subunit 2 family. As to quaternary structure, component of the cytochrome c oxidase (complex IV, CIV), a multisubunit enzyme composed of a catalytic core of 3 subunits and several supernumerary subunits. The complex exists as a monomer or a dimer and forms supercomplexes (SCs) in the inner mitochondrial membrane with ubiquinol-cytochrome c oxidoreductase (cytochrome b-c1 complex, complex III, CIII). It depends on Cu cation as a cofactor.

It localises to the mitochondrion inner membrane. It carries out the reaction 4 Fe(II)-[cytochrome c] + O2 + 8 H(+)(in) = 4 Fe(III)-[cytochrome c] + 2 H2O + 4 H(+)(out). In terms of biological role, component of the cytochrome c oxidase, the last enzyme in the mitochondrial electron transport chain which drives oxidative phosphorylation. The respiratory chain contains 3 multisubunit complexes succinate dehydrogenase (complex II, CII), ubiquinol-cytochrome c oxidoreductase (cytochrome b-c1 complex, complex III, CIII) and cytochrome c oxidase (complex IV, CIV), that cooperate to transfer electrons derived from NADH and succinate to molecular oxygen, creating an electrochemical gradient over the inner membrane that drives transmembrane transport and the ATP synthase. Cytochrome c oxidase is the component of the respiratory chain that catalyzes the reduction of oxygen to water. Electrons originating from reduced cytochrome c in the intermembrane space (IMS) are transferred via the dinuclear copper A center (CU(A)) of subunit 2 and heme A of subunit 1 to the active site in subunit 1, a binuclear center (BNC) formed by heme A3 and copper B (CU(B)). The BNC reduces molecular oxygen to 2 water molecules using 4 electrons from cytochrome c in the IMS and 4 protons from the mitochondrial matrix. This is Cytochrome c oxidase subunit 2 (COII) from Paracentrotus lividus (Common sea urchin).